The chain runs to 336 residues: tRNA N6-adenosine threonylcarbamoyltransferase (336 aa).

Fe cation contacts are provided by histidine 111 and histidine 115. Substrate-binding positions include 133-137 (LISGG), aspartate 166, glycine 179, and asparagine 276. Aspartate 301 provides a ligand contact to Fe cation.

It belongs to the KAE1 / TsaD family. Requires Fe(2+) as cofactor.

It is found in the cytoplasm. The catalysed reaction is L-threonylcarbamoyladenylate + adenosine(37) in tRNA = N(6)-L-threonylcarbamoyladenosine(37) in tRNA + AMP + H(+). In terms of biological role, required for the formation of a threonylcarbamoyl group on adenosine at position 37 (t(6)A37) in tRNAs that read codons beginning with adenine. Is involved in the transfer of the threonylcarbamoyl moiety of threonylcarbamoyl-AMP (TC-AMP) to the N6 group of A37, together with TsaE and TsaB. TsaD likely plays a direct catalytic role in this reaction. This chain is tRNA N6-adenosine threonylcarbamoyltransferase, found in Wolbachia pipientis subsp. Culex pipiens (strain wPip).